A 133-amino-acid polypeptide reads, in one-letter code: Small ribosomal subunit protein uS8 (133 aa).

The protein belongs to the universal ribosomal protein uS8 family. Part of the 30S ribosomal subunit. Contacts proteins S5 and S12.

Functionally, one of the primary rRNA binding proteins, it binds directly to 16S rRNA central domain where it helps coordinate assembly of the platform of the 30S subunit. The sequence is that of Small ribosomal subunit protein uS8 from Acaryochloris marina (strain MBIC 11017).